The chain runs to 78 residues: MAQQRRGGRRRRKVDFIAANHIEYIDYKDTDLLRRFISERGKILPRRVTGTSAKNQRKLTIAIKRARIMGLLPFVAED.

Belongs to the bacterial ribosomal protein bS18 family. As to quaternary structure, part of the 30S ribosomal subunit. Forms a tight heterodimer with protein bS6.

Its function is as follows. Binds as a heterodimer with protein bS6 to the central domain of the 16S rRNA, where it helps stabilize the platform of the 30S subunit. The sequence is that of Small ribosomal subunit protein bS18 from Limosilactobacillus reuteri (strain DSM 20016) (Lactobacillus reuteri).